Here is a 650-residue protein sequence, read N- to C-terminus: Probable basic-leucine zipper transcription factor K (650 aa).

A coiled-coil region spans residues 37-180 (IDNNNNNYSN…KQQKQQQQEQ (144 aa)). Disordered stretches follow at residues 109-130 (IPQQQQQEQDQQEDQDQEQEQE) and 242-279 (TTLNTNLQSDNNNNNNNNNNNNNNNNNNNNNNNNNNNL). Positions 118-129 (DQQEDQDQEQEQ) are enriched in acidic residues. Residues 242-251 (TTLNTNLQSD) are compositionally biased toward polar residues. The segment covering 252-278 (NNNNNNNNNNNNNNNNNNNNNNNNNNN) has biased composition (low complexity). Residues 259-286 (NNNNNNNNNNNNNNNNNNNNLLNEKQIE) adopt a coiled-coil conformation. In terms of domain architecture, bZIP spans 305-368 (FNKIEKGKRN…IEIMRSEPES (64 aa)). The tract at residues 307–327 (KIEKGKRNQTESSKNFRERKK) is basic motif. The segment at 330–337 (IKDIELKL) is leucine-zipper. The segment covering 452–466 (NNNNNNNNNNNNNNN) has biased composition (low complexity). The segment at 452–473 (NNNNNNNNNNNNNNNDNDDDNE) is disordered.

It belongs to the bZIP family.

The protein resides in the nucleus. In terms of biological role, probable transcriptional regulator. This chain is Probable basic-leucine zipper transcription factor K (bzpK), found in Dictyostelium discoideum (Social amoeba).